The following is a 663-amino-acid chain: Alcohol oxidase (663 aa).

An FAD-binding site is contributed by 8 to 39; the sequence is DVIVCGGGSTGCVIAGRLANVDENLKVLLIEN. The Proton acceptor role is filled by histidine 567. The Microbody targeting signal motif lies at 661-663; the sequence is ARY.

The protein belongs to the GMC oxidoreductase family. As to quaternary structure, homooctamer. FAD serves as cofactor.

Its subcellular location is the peroxisome matrix. The enzyme catalyses a primary alcohol + O2 = an aldehyde + H2O2. The protein operates within energy metabolism; methane degradation. Catalyzes the oxidation of methanol to formaldehyde and hydrogen peroxide, the first step in the methanol utilization pathway of methylotrophic yeasts. The chain is Alcohol oxidase (AOD1) from Candida boidinii (Yeast).